Consider the following 213-residue polypeptide: Protein-L-isoaspartate O-methyltransferase (213 aa).

The active site involves S61.

The protein belongs to the methyltransferase superfamily. L-isoaspartyl/D-aspartyl protein methyltransferase family.

It is found in the cytoplasm. It catalyses the reaction [protein]-L-isoaspartate + S-adenosyl-L-methionine = [protein]-L-isoaspartate alpha-methyl ester + S-adenosyl-L-homocysteine. Functionally, catalyzes the methyl esterification of L-isoaspartyl residues in peptides and proteins that result from spontaneous decomposition of normal L-aspartyl and L-asparaginyl residues. It plays a role in the repair and/or degradation of damaged proteins. This is Protein-L-isoaspartate O-methyltransferase from Petrotoga mobilis (strain DSM 10674 / SJ95).